An 803-amino-acid chain; its full sequence is Spondin-1 (803 aa).

A signal peptide spans 1 to 23 (MGLIFQPLFWQYVATSYALMVLG). The Reelin domain maps to 24-190 (FLDETVEKAI…DLTLEGGNEK (167 aa)). Cystine bridges form between Cys-39–Cys-124, Cys-152–Cys-178, Cys-195–Cys-331, Cys-196–Cys-335, Cys-198–Cys-409, Cys-437–Cys-474, Cys-448–Cys-483, Cys-453–Cys-488, Cys-496–Cys-532, Cys-507–Cys-511, Cys-542–Cys-548, Cys-553–Cys-589, Cys-564–Cys-568, and Cys-599–Cys-604. Residues 191 to 383 (TIPDCCACGT…LTSLDHPQSP (193 aa)) enclose the Spondin domain. The N-linked (GlcNAc...) asparagine glycan is linked to Asn-210. Ca(2+)-binding residues include Asp-320, Asp-349, and Asp-353. The tract at residues 353–389 (DSGVTYESPNKPTIPQDKIRPLTSLDHPQSPSMTRGG) is disordered. The segment covering 354–365 (SGVTYESPNKPT) has biased composition (polar residues). TSP type-1 domains are found at residues 436–489 (TCIY…PGCS), 495–549 (TCMM…EECE), 552–605 (SCIV…PECH), 608–662 (PCVL…PECP), and 664–717 (SCEL…RKCQ). Asn-677 carries N-linked (GlcNAc...) asparagine glycosylation. Positions 722–741 (NERRHLKDAREKRRSEKIKE) are disordered. The TSP type-1 6 domain occupies 750–802 (VCKMKPWTAWTECTKFCGGGIQERFMTVKKRFKSSQFTSCKDKKEIRACNVHP).

In terms of tissue distribution, expressed at high levels in the floor plate.

It localises to the secreted. Its subcellular location is the extracellular space. The protein resides in the extracellular matrix. Its function is as follows. Promotes the attachment of spinal cord and sensory neuron cells and the outgrowth of neurites in vitro. May contribute to the growth and guidance of axons in both the spinal cord and the PNS. The polypeptide is Spondin-1 (spon1) (Xenopus laevis (African clawed frog)).